Consider the following 58-residue polypeptide: UPF0434 protein Swoo_1821 (58 aa).

The protein belongs to the UPF0434 family.

The protein is UPF0434 protein Swoo_1821 of Shewanella woodyi (strain ATCC 51908 / MS32).